The sequence spans 106 residues: NADH-quinone oxidoreductase subunit K (106 aa).

3 helical membrane-spanning segments follow: residues 8 to 28 (IGIE…IFGV), 35 to 55 (IIMF…FVAF), and 66 to 86 (VFVF…LAIL).

It belongs to the complex I subunit 4L family. As to quaternary structure, NDH-1 is composed of 14 different subunits. Subunits NuoA, H, J, K, L, M, N constitute the membrane sector of the complex.

Its subcellular location is the cell inner membrane. The catalysed reaction is a quinone + NADH + 5 H(+)(in) = a quinol + NAD(+) + 4 H(+)(out). NDH-1 shuttles electrons from NADH, via FMN and iron-sulfur (Fe-S) centers, to quinones in the respiratory chain. The immediate electron acceptor for the enzyme in this species is believed to be a menaquinone. Couples the redox reaction to proton translocation (for every two electrons transferred, four hydrogen ions are translocated across the cytoplasmic membrane), and thus conserves the redox energy in a proton gradient. This is NADH-quinone oxidoreductase subunit K from Flavobacterium psychrophilum (strain ATCC 49511 / DSM 21280 / CIP 103535 / JIP02/86).